We begin with the raw amino-acid sequence, 304 residues long: Non-specific ribonucleoside hydrolase RihC (304 aa).

His233 is an active-site residue.

The protein belongs to the IUNH family. RihC subfamily.

Hydrolyzes both purine and pyrimidine ribonucleosides with a broad-substrate specificity. The sequence is that of Non-specific ribonucleoside hydrolase RihC from Klebsiella pneumoniae (strain 342).